Here is a 239-residue protein sequence, read N- to C-terminus: Methylthioribulose-1-phosphate dehydratase (239 aa).

Cys-94 lines the substrate pocket. Residues His-112 and His-114 each coordinate Zn(2+). Glu-136 acts as the Proton donor/acceptor in catalysis. Residue His-192 participates in Zn(2+) binding.

Belongs to the aldolase class II family. MtnB subfamily. It depends on Zn(2+) as a cofactor.

The protein resides in the cytoplasm. It catalyses the reaction 5-(methylsulfanyl)-D-ribulose 1-phosphate = 5-methylsulfanyl-2,3-dioxopentyl phosphate + H2O. It participates in amino-acid biosynthesis; L-methionine biosynthesis via salvage pathway; L-methionine from S-methyl-5-thio-alpha-D-ribose 1-phosphate: step 2/6. Catalyzes the dehydration of methylthioribulose-1-phosphate (MTRu-1-P) into 2,3-diketo-5-methylthiopentyl-1-phosphate (DK-MTP-1-P). Functions in the methionine salvage pathway. May play a role in apoptosis. The protein is Methylthioribulose-1-phosphate dehydratase of Aquarana catesbeiana (American bullfrog).